The primary structure comprises 452 residues: Probable 1,4-beta-D-glucan cellobiohydrolase A (452 aa).

An N-terminal signal peptide occupies residues 1–17 (MHQRALLFSALLTAVRA). The N-linked (GlcNAc...) asparagine glycan is linked to N62. The Nucleophile role is filled by E227. Residue E232 is the Proton donor of the active site. N-linked (GlcNAc...) asparagine glycans are attached at residues N285, N335, N402, and N445.

Belongs to the glycosyl hydrolase 7 (cellulase C) family.

It is found in the secreted. It carries out the reaction Hydrolysis of (1-&gt;4)-beta-D-glucosidic linkages in cellulose and cellotetraose, releasing cellobiose from the non-reducing ends of the chains.. Its function is as follows. The biological conversion of cellulose to glucose generally requires three types of hydrolytic enzymes: (1) Endoglucanases which cut internal beta-1,4-glucosidic bonds; (2) Exocellobiohydrolases that cut the disaccharide cellobiose from the non-reducing end of the cellulose polymer chain; (3) Beta-1,4-glucosidases which hydrolyze the cellobiose and other short cello-oligosaccharides to glucose. In Aspergillus niger (strain ATCC MYA-4892 / CBS 513.88 / FGSC A1513), this protein is Probable 1,4-beta-D-glucan cellobiohydrolase A (cbhA).